Consider the following 383-residue polypeptide: ATP phosphoribosyltransferase regulatory subunit (383 aa).

The protein belongs to the class-II aminoacyl-tRNA synthetase family. HisZ subfamily. As to quaternary structure, heteromultimer composed of HisG and HisZ subunits.

The protein localises to the cytoplasm. The protein operates within amino-acid biosynthesis; L-histidine biosynthesis; L-histidine from 5-phospho-alpha-D-ribose 1-diphosphate: step 1/9. Its function is as follows. Required for the first step of histidine biosynthesis. May allow the feedback regulation of ATP phosphoribosyltransferase activity by histidine. This chain is ATP phosphoribosyltransferase regulatory subunit, found in Cupriavidus pinatubonensis (strain JMP 134 / LMG 1197) (Cupriavidus necator (strain JMP 134)).